The sequence spans 311 residues: Homeobox-leucine zipper protein HOX1 (311 aa).

Disordered stretches follow at residues 29–69 and 97–160; these read AGGA…SDHR and AETT…KKLR. Low complexity predominate over residues 119 to 145; it reads SSPNSTLSSLSGKRGAPSAATAAAAAA. Positions 154–213 form a DNA-binding region, homeobox; that stretch reads GSRKKLRLSKDQAAVLEDTFKEHNTLNPKQKAALARQLNLKPRQVEVWFQNRRARTKLKQ. The segment at 212–256 is leucine-zipper; sequence KQTEVDCELLKRCCETLTDENRRLHRELQELRALKLATAAAAPHH. The segment at 279-311 is disordered; sequence SAATTTRNNSGAAPARPVPTRPWPPAAAQRSSA. Polar residues predominate over residues 280–289; the sequence is AATTTRNNSG. Residues 294 to 303 show a composition bias toward pro residues; sequence RPVPTRPWPP.

The protein belongs to the HD-ZIP homeobox family. Class II subfamily. Homodimer. May form a heterodimer with HOX2, HOX3 or HOX7. In terms of tissue distribution, expressed in root provascular and vascular cylinder, provascular and vascular strands of leaves, provascular and vascular strands of the whole panicle, in mature embryo provascular bundles of scutellum and embryonic axis and provascular and vascular strands of young immature spikelet organs. Expressed in differentiating and differentiated xylem and phloem elements, and in outer and inner bundle sheath cells of all vascular bundles. Expressed in auricles, ligules, culm, guard cells brac hairs and pollen.

It localises to the nucleus. Functionally, probable transcription repressor involved leaf development. Binds to the DNA sequence 5'-CAAT[GC]ATTG-3'. May act as a regulatory switch to specify provascular cell fate. In Oryza sativa subsp. japonica (Rice), this protein is Homeobox-leucine zipper protein HOX1 (HOX1).